A 182-amino-acid chain; its full sequence is RNA pyrophosphohydrolase (182 aa).

In terms of domain architecture, Nudix hydrolase spans 6–149 (GYRPNVGIIL…KRLVYEQALN (144 aa)). The Nudix box signature appears at 38–59 (GGIKRGETPEEAMFRELYEEVG). The disordered stretch occupies residues 162–182 (PRHKKEQEPFSDVVDSVRSEE).

It belongs to the Nudix hydrolase family. RppH subfamily. It depends on a divalent metal cation as a cofactor.

Accelerates the degradation of transcripts by removing pyrophosphate from the 5'-end of triphosphorylated RNA, leading to a more labile monophosphorylated state that can stimulate subsequent ribonuclease cleavage. The sequence is that of RNA pyrophosphohydrolase from Dechloromonas aromatica (strain RCB).